The following is a 414-amino-acid chain: Ornithine aminotransferase (414 aa).

A disulfide bridge links Cys-154 with Cys-163. Lys-262 is modified (N6-(pyridoxal phosphate)lysine).

The protein belongs to the class-III pyridoxal-phosphate-dependent aminotransferase family. Homodimer. Pyridoxal 5'-phosphate serves as cofactor. The disulfide bond between Cys-154 and Cys-163 is reduced by TRX1 which increases OAT catalytic activity.

The protein localises to the cytoplasm. It catalyses the reaction a 2-oxocarboxylate + L-ornithine = L-glutamate 5-semialdehyde + an L-alpha-amino acid. The catalysed reaction is L-ornithine + 2-oxoglutarate = L-glutamate 5-semialdehyde + L-glutamate. Its pathway is amino-acid biosynthesis; L-proline biosynthesis; L-glutamate 5-semialdehyde from L-ornithine: step 1/1. With respect to regulation, unlike for mammalian OATs, activity is increased by TRX1-mediated reduction of the disulfide bond between Cys-154 and Cys-163. Binding to TRX1 may also induce conformational changes that facilitate substrate binding. In terms of biological role, catalyzes the transamination of alpha-ketoglutarate with ornithine or N-acetylornithine and of glutamate-5-semialdehyde with glutamate and alanine. In Plasmodium chabaudi chabaudi, this protein is Ornithine aminotransferase.